Consider the following 579-residue polypeptide: Lens epithelium-derived growth factor (579 aa).

Positions 1–64 (MSRDFKPGDL…PKDIFPYSEN (64 aa)) constitute a PWWP domain. Disordered stretches follow at residues 62-81 (SENKDKYGKPNKRKGFNEGL), 88-203 (PKVK…EEAA), 215-397 (AAPV…SMDS), and 492-579 (AEQK…FENK). Positions 94 to 107 (HQPSHPAVNTSIKE) are enriched in polar residues. Positions 153–173 (KEMHSTKEDEEPSEKNSKEGV) are enriched in basic and acidic residues. Residues 184 to 193 (VARRGRKRKA) are compositionally biased toward basic residues. The Nuclear localization signal signature appears at 186–196 (RRGRKRKAEKQ). The span at 215-224 (AAPVTVSPKV) shows a compositional bias: low complexity. Residues 261-308 (EEEKAKKKGPDEKPKKQGKKDEEGQKEEEKPKKEYDKKDGKKEAEPKR) show a composition bias toward basic and acidic residues. The span at 321–330 (DSEDEGGEEE) shows a compositional bias: acidic residues. The span at 334–349 (KKKGGRSFQSTHRRNI) shows a compositional bias: basic residues. Residues 347 to 442 (RNIMRGQHEK…SMQQAQKHTE (96 aa)) are a coiled coil. 2 stretches are compositionally biased toward basic and acidic residues: residues 352–397 (GQHE…SMDS) and 492–522 (AEQKQHEEANKTKEQWKKGTNKKNEKEKDQT). The integrase-binding domain (IBD) stretch occupies residues 387–464 (MEKKRETSMD…VSQVIMEKST (78 aa)). Polar residues predominate over residues 530 to 543 (GSETQDTNQSQHNG). The span at 544–579 (ENAEEKDKLEVASKKKTCGEESELEKPAKESAFENK) shows a compositional bias: basic and acidic residues.

The protein belongs to the HDGF family.

Its subcellular location is the nucleus. Its function is as follows. Transcriptional coactivator involved in neuroepithelial stem cell differentiation and neurogenesis. Involved in particular in lens epithelial cell gene regulation and stress responses. May play an important role in lens epithelial to fiber cell terminal differentiation. May play a protective role during stress-induced apoptosis. The protein is Lens epithelium-derived growth factor (PSIP1) of Gallus gallus (Chicken).